A 497-amino-acid polypeptide reads, in one-letter code: Transcription termination/antitermination protein NusA (497 aa).

The 66-residue stretch at 135-200 (GKILTGIVKK…RGAQLFVTRS (66 aa)) folds into the S1 motif domain. Positions 302-372 (RHTIDIAVDS…LKIDQKISNI (71 aa)) constitute a KH domain. 2 consecutive repeat copies span residues 364–414 (KIDQ…KKAL) and 439–489 (GMNQ…RNIC). The 2 X 51 AA approximate repeats stretch occupies residues 364–489 (KIDQKISNIL…MLIMAARNIC (126 aa)).

This sequence belongs to the NusA family. In terms of assembly, monomer. Binds directly to the core enzyme of the DNA-dependent RNA polymerase and to nascent RNA.

The protein localises to the cytoplasm. Its function is as follows. Participates in both transcription termination and antitermination. The chain is Transcription termination/antitermination protein NusA from Buchnera aphidicola subsp. Baizongia pistaciae (strain Bp).